A 104-amino-acid polypeptide reads, in one-letter code: L-rhamnose mutarotase (104 aa).

Tyr18 contributes to the substrate binding site. The Proton donor role is filled by His22. Residues Tyr41 and 76-77 (WW) each bind substrate.

This sequence belongs to the rhamnose mutarotase family. In terms of assembly, homodimer.

Its subcellular location is the cytoplasm. It carries out the reaction alpha-L-rhamnose = beta-L-rhamnose. Its pathway is carbohydrate metabolism; L-rhamnose metabolism. Functionally, involved in the anomeric conversion of L-rhamnose. The protein is L-rhamnose mutarotase of Citrobacter koseri (strain ATCC BAA-895 / CDC 4225-83 / SGSC4696).